Here is a 249-residue protein sequence, read N- to C-terminus: Type-1Aa cytolytic delta-endotoxin (249 aa).

Belongs to the cyt1/cyt2 endotoxin family. In terms of processing, active after proteolytic processing.

Kills the larvae of dipteran insects by making pores in the epithelial cell membrane of the insect midgut. Acts on mosquitos and black flies. This Bacillus thuringiensis subsp. morrisoni protein is Type-1Aa cytolytic delta-endotoxin (cyt1Aa).